A 53-amino-acid polypeptide reads, in one-letter code: MAVPKRRVSHTRAAKRRTHYKLTLPMPVKDADGTWRMPHHMNMTTGEYKTTKA.

A compositionally biased stretch (basic residues) spans 1 to 20 (MAVPKRRVSHTRAAKRRTHY). Residues 1–53 (MAVPKRRVSHTRAAKRRTHYKLTLPMPVKDADGTWRMPHHMNMTTGEYKTTKA) form a disordered region. Polar residues predominate over residues 42-53 (NMTTGEYKTTKA).

Belongs to the bacterial ribosomal protein bL32 family.

This is Large ribosomal subunit protein bL32 from Sulfurovum sp. (strain NBC37-1).